The primary structure comprises 100 residues: NADH-quinone oxidoreductase subunit K 2 (100 aa).

The next 3 membrane-spanning stretches (helical) occupy residues 4-24 (LWWYIVLGVVLFVIGAAGVLI), 28-48 (ILVVLMSLELLLNSVNINFIA), and 60-80 (IFAIFVIAITAAEVAVALGIL).

This sequence belongs to the complex I subunit 4L family. NDH-1 is composed of 14 different subunits. Subunits NuoA, H, J, K, L, M, N constitute the membrane sector of the complex.

Its subcellular location is the cell inner membrane. The catalysed reaction is a quinone + NADH + 5 H(+)(in) = a quinol + NAD(+) + 4 H(+)(out). Its function is as follows. NDH-1 shuttles electrons from NADH, via FMN and iron-sulfur (Fe-S) centers, to quinones in the respiratory chain. The immediate electron acceptor for the enzyme in this species is believed to be ubiquinone. Couples the redox reaction to proton translocation (for every two electrons transferred, four hydrogen ions are translocated across the cytoplasmic membrane), and thus conserves the redox energy in a proton gradient. This Rhizobium etli (strain ATCC 51251 / DSM 11541 / JCM 21823 / NBRC 15573 / CFN 42) protein is NADH-quinone oxidoreductase subunit K 2.